The chain runs to 354 residues: Erythroferrone (354 aa).

Positions 1 to 28 are cleaved as a signal peptide; it reads MAPARRPAGARLLLVYAGLLAAAAAGLG. 2 stretches are compositionally biased toward low complexity: residues 26–37 and 51–62; these read GLGSPEPGAPSR and PRGPGESRAGPA. The segment at 26–123 is disordered; sequence GLGSPEPGAP…PGPPGPQGPP (98 aa). Basic and acidic residues predominate over residues 69 to 80; sequence TAERAHSVDPRD. Residues 94 to 107 are compositionally biased toward basic residues; the sequence is NGKKRSRGKAKKLK. Residues Pro-111, Pro-113, Pro-114, Pro-116, Pro-117, and Pro-119 each carry the hydroxyproline modification. Residues 111-123 are compositionally biased toward pro residues; that stretch reads PGPPGPPGPQGPP. Residues 199-354 form the C1q domain; it reads APRVEAAFLC…SHFSAVLLGV (156 aa). Asn-243, Asn-295, and Asn-333 each carry an N-linked (GlcNAc...) asparagine glycan.

The protein belongs to the adipolin/erythroferrone family. As to quaternary structure, homodimer; disulfide-linked. Forms trimer, hexamers and higher molecular weight oligomers. May form heteromeric complexes with C1QTNF2 and C1QTNF12 and, to a lesser extent, with C1QTNF5 and C1QTNF10. Interacts with BMP5 and BMP7; the interaction inhibits BMP-induced transcription of HAMP. Interacts with BMP6; the interaction inhibits BMP-induced transcription of HAMP. Interacts with BMP2. Interacts with heterodimers composed of BMP2 and BMP6 in vitro, the interaction inhibits the heterodimer binding to its receptor BMPR1A /ALK3 and thereby suppresses expression of HAMP. In terms of processing, N-glycosylated; required for secretion of the mature protein.

It is found in the secreted. Iron-regulatory hormone that acts as an erythroid regulator after hemorrhage: produced by erythroblasts following blood loss and mediates suppression of hepcidin (HAMP) expression in the liver, thereby promoting increased iron absorption and mobilization from stores. Promotes lipid uptake into adipocytes and hepatocytes via transcriptional up-regulation of genes involved in fatty acid uptake. Inhibits apoptosis and inflammatory response in cardiomyocytes via promotion of sphingosine-1-phosphate (S1P) and cAMP-dependent activation of AKT signaling. Inhibits autophagy induced by nutrient deficiency in hepatocytes via promoting the phosphorylation of IRS1, AKT, and MTOR, and thereby subsequent activation of the AKT-MTOR signaling pathway. Negatively regulates the differentiation of osteoblasts, potentially via sequestering BMP2, and thereby inhibits the activation of SMAD signaling. The reduction in BMP2 signaling in osteoblasts also results in an increase in expression of the osteoclastogenesis-promoting factors TNFSF11/RANKL and SOST, thereby indirectly promotes bone resorption. This Homo sapiens (Human) protein is Erythroferrone.